A 110-amino-acid chain; its full sequence is MKFLPFLRFCTWYVILVRGSPPLMKYECSDVGKKFNGTVCNDASSDCDTSVPPKVPLDPTGAAGRYFVTKLVGERGTSSNIFSRLDMAILEALIFMQSCLILSCSWWILN.

This is an uncharacterized protein from Saccharomyces cerevisiae (strain ATCC 204508 / S288c) (Baker's yeast).